The following is a 260-amino-acid chain: Sulfoquinovose 1-dehydrogenase (260 aa).

Catalysis depends on Y160, which acts as the Proton acceptor.

The protein belongs to the short-chain dehydrogenases/reductases (SDR) family.

The enzyme catalyses 6-sulfo-D-quinovose + NAD(+) = 6-deoxy-6-sulfo-D-glucono-1,5-lactone + NADH + H(+). Functionally, catalyzes the oxidation of sulfoquinovose to 6-deoxy-6-sulfo-D-glucono-1,5-lactone, with a strong preference for NAD(+) as the electron acceptor. Is involved in a degradation pathway of sulfoquinovose (SQ) that allows P.putida SQ1 to use SQ as the sole carbon and energy source for growth. The polypeptide is Sulfoquinovose 1-dehydrogenase (Pseudomonas putida (Arthrobacter siderocapsulatus)).